We begin with the raw amino-acid sequence, 362 residues long: Putative glutamate--cysteine ligase 2-1 (362 aa).

The protein belongs to the glutamate--cysteine ligase type 2 family. YbdK subfamily.

It carries out the reaction L-cysteine + L-glutamate + ATP = gamma-L-glutamyl-L-cysteine + ADP + phosphate + H(+). Its function is as follows. ATP-dependent carboxylate-amine ligase which exhibits weak glutamate--cysteine ligase activity. The chain is Putative glutamate--cysteine ligase 2-1 from Streptomyces avermitilis (strain ATCC 31267 / DSM 46492 / JCM 5070 / NBRC 14893 / NCIMB 12804 / NRRL 8165 / MA-4680).